Consider the following 89-residue polypeptide: Small ribosomal subunit protein uS15 (89 aa).

This sequence belongs to the universal ribosomal protein uS15 family. Part of the 30S ribosomal subunit. Forms a bridge to the 50S subunit in the 70S ribosome, contacting the 23S rRNA.

In terms of biological role, one of the primary rRNA binding proteins, it binds directly to 16S rRNA where it helps nucleate assembly of the platform of the 30S subunit by binding and bridging several RNA helices of the 16S rRNA. Forms an intersubunit bridge (bridge B4) with the 23S rRNA of the 50S subunit in the ribosome. This chain is Small ribosomal subunit protein uS15, found in Acinetobacter baylyi (strain ATCC 33305 / BD413 / ADP1).